Reading from the N-terminus, the 261-residue chain is Hemin import ATP-binding protein HmuV (261 aa).

Residues 7–243 (LRGQNLSLQF…EIIDAVYGYK (237 aa)) enclose the ABC transporter domain. 39 to 46 (GPNGAGKS) contributes to the ATP binding site.

Belongs to the ABC transporter superfamily. Heme (hemin) importer (TC 3.A.1.14.5) family. As to quaternary structure, the complex is composed of two ATP-binding proteins (HmuV), two transmembrane proteins (HmuU) and a solute-binding protein (HmuT).

The protein localises to the cell inner membrane. In terms of biological role, part of the ABC transporter complex HmuTUV involved in hemin import. Responsible for energy coupling to the transport system. This Vibrio vulnificus (strain CMCP6) protein is Hemin import ATP-binding protein HmuV.